We begin with the raw amino-acid sequence, 428 residues long: MAKQKPVLNVAFIGHVDAGKSTTVGRLLYDSGAIDPQLLEKLKREAQERGKAGFEFAYVMDNLKEERERGVTIDVAHKKFETQKYEVTIVDCPGHRDFIKNMITGASQADAAVLVVDVNDAKTGIQPQTREHMFLARTLGIKQIAVAINKMDTVNYSQEEYEKMKKMLSEQLLKVLGYNPDQIDFIPTASLKGDNVVKRSENMPWYKGPTLVEALDKFQPPEKPTNLPLRIPIQDVYSITGVGTVPVGRVETGILRPGDKVVFEPAGVSGEVKSIEMHHEQIPQAEPGDNIGFNVRGVSKKDIKRGDVCGHPDNPPTVAEEFTAQIVVLQHPTAITVGYTPVFHAHTAQVACTFIELLKKLDPRTGQVIEENPQFLKTGDAAIVKIKPTKPMVIENVREIPQLGRFAIRDMGMTIAAGMAIDVKAKNK.

The tr-type G domain occupies 5–225; it reads KPVLNVAFIG…DKFQPPEKPT (221 aa). Residues 14 to 21 form a G1 region; the sequence is GHVDAGKS. 14-21 lines the GTP pocket; the sequence is GHVDAGKS. Serine 21 provides a ligand contact to Mg(2+). The G2 stretch occupies residues 70–74; that stretch reads GVTID. The segment at 91–94 is G3; it reads DCPG. GTP contacts are provided by residues 91-95 and 149-152; these read DCPGH and NKMD. The tract at residues 149 to 152 is G4; sequence NKMD. A G5 region spans residues 189 to 191; the sequence is ASL.

The protein belongs to the TRAFAC class translation factor GTPase superfamily. Classic translation factor GTPase family. EF-Tu/EF-1A subfamily.

Its subcellular location is the cytoplasm. It catalyses the reaction GTP + H2O = GDP + phosphate + H(+). Functionally, GTP hydrolase that promotes the GTP-dependent binding of aminoacyl-tRNA to the A-site of ribosomes during protein biosynthesis. This chain is Elongation factor 1-alpha, found in Methanocaldococcus jannaschii (strain ATCC 43067 / DSM 2661 / JAL-1 / JCM 10045 / NBRC 100440) (Methanococcus jannaschii).